Reading from the N-terminus, the 208-residue chain is Mediator of RNA polymerase II transcription subunit 18 (208 aa).

Ser66 carries the post-translational modification Phosphoserine.

This sequence belongs to the Mediator complex subunit 18 family. Component of the Mediator complex, which is composed of MED1, MED4, MED6, MED7, MED8, MED9, MED10, MED11, MED12, MED13, MED13L, MED14, MED15, MED16, MED17, MED18, MED19, MED20, MED21, MED22, MED23, MED24, MED25, MED26, MED27, MED29, MED30, MED31, CCNC, CDK8 and CDC2L6/CDK11. The MED12, MED13, CCNC and CDK8 subunits form a distinct module termed the CDK8 module. Mediator containing the CDK8 module is less active than Mediator lacking this module in supporting transcriptional activation. Individual preparations of the Mediator complex lacking one or more distinct subunits have been variously termed ARC, CRSP, DRIP, PC2, SMCC and TRAP.

It localises to the nucleus. In terms of biological role, component of the Mediator complex, a coactivator involved in the regulated transcription of nearly all RNA polymerase II-dependent genes. Mediator functions as a bridge to convey information from gene-specific regulatory proteins to the basal RNA polymerase II transcription machinery. Mediator is recruited to promoters by direct interactions with regulatory proteins and serves as a scaffold for the assembly of a functional preinitiation complex with RNA polymerase II and the general transcription factors. The chain is Mediator of RNA polymerase II transcription subunit 18 (MED18) from Homo sapiens (Human).